A 166-amino-acid chain; its full sequence is Small ribosomal subunit protein uS5 (166 aa).

Residues 11–74 enclose the S5 DRBM domain; sequence LQEKLVQVNR…EAARKNMVDV (64 aa).

This sequence belongs to the universal ribosomal protein uS5 family. In terms of assembly, part of the 30S ribosomal subunit. Contacts proteins S4 and S8.

In terms of biological role, with S4 and S12 plays an important role in translational accuracy. Located at the back of the 30S subunit body where it stabilizes the conformation of the head with respect to the body. This Marinobacter nauticus (strain ATCC 700491 / DSM 11845 / VT8) (Marinobacter aquaeolei) protein is Small ribosomal subunit protein uS5.